The primary structure comprises 59 residues: UPF0181 protein YoaH (59 aa).

Belongs to the UPF0181 family.

This is UPF0181 protein YoaH from Salmonella arizonae (strain ATCC BAA-731 / CDC346-86 / RSK2980).